We begin with the raw amino-acid sequence, 406 residues long: Argininosuccinate synthase (406 aa).

Residues 12–20 and Ala-39 each bind ATP; that span reads AYSGGLDTS. L-citrulline is bound by residues Tyr-90 and Ser-95. ATP is bound at residue Gly-120. L-aspartate is bound by residues Thr-122, Asn-126, and Asp-127. Asn-126 contributes to the L-citrulline binding site. 5 residues coordinate L-citrulline: Arg-130, Ser-179, Ser-188, Glu-264, and Tyr-276.

It belongs to the argininosuccinate synthase family. Type 1 subfamily. As to quaternary structure, homotetramer.

It is found in the cytoplasm. The enzyme catalyses L-citrulline + L-aspartate + ATP = 2-(N(omega)-L-arginino)succinate + AMP + diphosphate + H(+). It participates in amino-acid biosynthesis; L-arginine biosynthesis; L-arginine from L-ornithine and carbamoyl phosphate: step 2/3. In Geobacter sp. (strain M21), this protein is Argininosuccinate synthase.